The primary structure comprises 341 residues: Type II restriction enzyme BgcI specificity subunit S.BcgI (341 aa).

This sequence belongs to the type-I restriction system S methylase family. In terms of assembly, heterotrimer of two A and one B subunit. Both subunits are necessary for DNA-binding, which is sequence non-specific. Mg(2+) serves as cofactor.

It catalyses the reaction Endonucleolytic cleavage of DNA to give specific double-stranded fragments with terminal 5'-phosphates.. DNA restriction requires S-adenosyl-L-methionine and Mg(2+), and is inhibited by S-adenosyl-homocysteine. SAM may be a cofactor for DNA restriction. In terms of biological role, the specificity subunit. A B, G, H and S subtype restriction enzyme that recognizes the double-stranded sequence 5'-CGAN(6)TGC-3' and cleaves bilaterally and symmetrically 10 base pairs upstream and 12 base pairs downstream of the sequence to release a 34-base pair fragment. Methylation of the recognition sequence occurs on the adenine in either one or both strands; seems to methylate restricted DNA. This subunit degrades DNA in a non-specific manner. The protein is Type II restriction enzyme BgcI specificity subunit S.BcgI of Heyndrickxia coagulans (Weizmannia coagulans).